The chain runs to 236 residues: Small ribosomal subunit protein uS3 (236 aa).

The KH type-2 domain occupies 39 to 112 (IREFITKHPK…RINLKVEEVG (74 aa)). The disordered stretch occupies residues 212–236 (YGDDNDGADAQTGQASKKPKRSYKR).

This sequence belongs to the universal ribosomal protein uS3 family. In terms of assembly, part of the 30S ribosomal subunit. Forms a tight complex with proteins S10 and S14.

In terms of biological role, binds the lower part of the 30S subunit head. Binds mRNA in the 70S ribosome, positioning it for translation. The sequence is that of Small ribosomal subunit protein uS3 from Rhodopirellula baltica (strain DSM 10527 / NCIMB 13988 / SH1).